Here is a 199-residue protein sequence, read N- to C-terminus: Imidazole glycerol phosphate synthase subunit HisH 2 (199 aa).

In terms of domain architecture, Glutamine amidotransferase type-1 spans 1 to 199 (MIAVIDVSGN…NNFLSLESTC (199 aa)). Cysteine 76 acts as the Nucleophile in catalysis. Residues histidine 177 and glutamate 179 contribute to the active site.

In terms of assembly, heterodimer of HisH and HisF.

It is found in the cytoplasm. It carries out the reaction 5-[(5-phospho-1-deoxy-D-ribulos-1-ylimino)methylamino]-1-(5-phospho-beta-D-ribosyl)imidazole-4-carboxamide + L-glutamine = D-erythro-1-(imidazol-4-yl)glycerol 3-phosphate + 5-amino-1-(5-phospho-beta-D-ribosyl)imidazole-4-carboxamide + L-glutamate + H(+). The catalysed reaction is L-glutamine + H2O = L-glutamate + NH4(+). It functions in the pathway amino-acid biosynthesis; L-histidine biosynthesis; L-histidine from 5-phospho-alpha-D-ribose 1-diphosphate: step 5/9. IGPS catalyzes the conversion of PRFAR and glutamine to IGP, AICAR and glutamate. The HisH subunit provides the glutamine amidotransferase activity that produces the ammonia necessary to HisF for the synthesis of IGP and AICAR. The polypeptide is Imidazole glycerol phosphate synthase subunit HisH 2 (Legionella pneumophila (strain Paris)).